A 290-amino-acid polypeptide reads, in one-letter code: N-acetylmannosamine kinase (290 aa).

ATP contacts are provided by residues 6–13 (ALDIGGTK) and 132–139 (GVGGGIIL). 4 residues coordinate Zn(2+): His-156, Cys-166, Cys-168, and Cys-173.

Belongs to the ROK (NagC/XylR) family. NanK subfamily. Homodimer.

It catalyses the reaction an N-acyl-D-mannosamine + ATP = an N-acyl-D-mannosamine 6-phosphate + ADP + H(+). Its pathway is amino-sugar metabolism; N-acetylneuraminate degradation; D-fructose 6-phosphate from N-acetylneuraminate: step 2/5. Its function is as follows. Catalyzes the phosphorylation of N-acetylmannosamine (ManNAc) to ManNAc-6-P. The sequence is that of N-acetylmannosamine kinase from Yersinia pestis (strain Pestoides F).